A 324-amino-acid polypeptide reads, in one-letter code: ATP phosphoribosyltransferase regulatory subunit (324 aa).

The protein belongs to the class-II aminoacyl-tRNA synthetase family. HisZ subfamily. In terms of assembly, heteromultimer composed of HisG and HisZ subunits.

Its subcellular location is the cytoplasm. Its pathway is amino-acid biosynthesis; L-histidine biosynthesis; L-histidine from 5-phospho-alpha-D-ribose 1-diphosphate: step 1/9. Functionally, required for the first step of histidine biosynthesis. May allow the feedback regulation of ATP phosphoribosyltransferase activity by histidine. This chain is ATP phosphoribosyltransferase regulatory subunit, found in Carboxydothermus hydrogenoformans (strain ATCC BAA-161 / DSM 6008 / Z-2901).